The sequence spans 882 residues: Piwi-like protein 3 (882 aa).

The segment covering methionine 1–arginine 15 has biased composition (basic residues). The interval methionine 1–glutamine 91 is disordered. Over residues serine 32–arginine 46 the composition is skewed to polar residues. The region spanning threonine 293–glycine 406 is the PAZ domain. Positions lysine 578 to histidine 868 constitute a Piwi domain.

This sequence belongs to the argonaute family. Piwi subfamily. In terms of tissue distribution, expressed in testis.

It localises to the cytoplasm. In terms of biological role, may play a role during spermatogenesis by repressing transposable elements and preventing their mobilization, which is essential for the germline integrity. Acts via the piRNA metabolic process, which mediates the repression of transposable elements during meiosis by forming complexes composed of piRNAs and Piwi proteins and govern the methylation and subsequent repression of transposons. Directly binds piRNAs, a class of 24 to 30 nucleotide RNAs that are generated by a Dicer-independent mechanism and are primarily derived from transposons and other repeated sequence elements. Besides their function in transposable elements repression, piRNAs are probably involved in other processes during meiosis such as translation regulation. This Homo sapiens (Human) protein is Piwi-like protein 3 (PIWIL3).